The sequence spans 202 residues: Outer-membrane lipoprotein LolB (202 aa).

The signal sequence occupies residues 1–24 (MESKEQHLIRQYFILAMFFLFLAG). C25 carries the N-palmitoyl cysteine lipid modification. A lipid anchor (S-diacylglycerol cysteine) is attached at C25.

The protein belongs to the LolB family. In terms of assembly, monomer.

It is found in the cell outer membrane. In terms of biological role, plays a critical role in the incorporation of lipoproteins in the outer membrane after they are released by the LolA protein. The protein is Outer-membrane lipoprotein LolB of Pseudoalteromonas translucida (strain TAC 125).